The following is an 872-amino-acid chain: Trichohyalin-like protein 1 (872 aa).

The region spanning 46 to 81 is the EF-hand domain; sequence CAIHAVERNLNLLNIDSNGAISFDEFVLAIFSFLNV. The segment covering 117–127 has biased composition (polar residues); sequence QWTEGTSQTQD. 3 disordered regions span residues 117–759, 774–813, and 830–872; these read QWTE…ERGA, LQQT…DSSD, and EFLP…APKQ. 8 stretches are compositionally biased toward basic and acidic residues: residues 142-155, 164-190, 218-235, 296-307, 324-348, 365-375, 399-435, and 486-505; these read SLEE…RVDP, LPVE…KVDQ, TKGE…DILA, GKDEPSSEHVDL, AAKD…ETRD, RVERKGVRGPE, EDKK…KDSE, and SGEK…KEDD. The segment covering 538-570 has biased composition (polar residues); it reads NSETSDLFVQGDSQSQTNPFRGSVQGSDSNNPE. 3 stretches are compositionally biased toward basic and acidic residues: residues 571–584, 592–608, and 664–684; these read TQKH…KRVQ, RGED…EHEG, and TKKD…KEED. Composition is skewed to polar residues over residues 699–708 and 718–729; these read ENNAVSQKTC and SPQQLAGEQSLS. Positions 730–751 are enriched in basic and acidic residues; sequence TKEHDPSVSESGLEERMQRDQE. Composition is skewed to polar residues over residues 774-793 and 801-812; these read LQQT…TASV and NQSSASLTNDSS. Residues 849 to 865 show a composition bias toward basic and acidic residues; the sequence is LEDKQGRPQREELEPQK.

The protein belongs to the S-100 family.

The polypeptide is Trichohyalin-like protein 1 (TCHHL1) (Bos taurus (Bovine)).